A 657-amino-acid polypeptide reads, in one-letter code: Filensin (657 aa).

The tract at residues 1–38 is head; it reads MYRSSFLREVRKEKYERSDAYDELRGSPEFDSLAQAQG. In terms of domain architecture, IF rod spans 38-318; the sequence is GLENLQELNE…RIIENEDSRL (281 aa). The interval 39–73 is coil 1A; it reads LENLQELNERFASYINRARVLEQRNTILRKQLETF. The segment at 74–82 is linker 1; the sequence is QRMDELVGL. The tract at residues 83–182 is coil 1B; that stretch reads DEAFAGQIEF…RYKKNLMEIQ (100 aa). The tract at residues 183 to 199 is linker 12; sequence TYVNILQQIIQTTPRVS. A coil 2 region spans residues 200–318; it reads PITTGISEEK…RIIENEDSRL (119 aa). Positions 319–657 are tail; the sequence is NSAIAGTPVT…SKKKPGDKGS (339 aa). Disordered regions lie at residues 503 to 530 and 565 to 593; these read IGGD…ICER and PDVS…TDHD. Over residues 519 to 530 the composition is skewed to basic and acidic residues; the sequence is PSEKEKRDICER.

It belongs to the intermediate filament family. Detected in eye lens fiber cells (at protein level). Detected in embryonic eye lens.

It localises to the cell membrane. The protein resides in the cytoplasm. Its subcellular location is the cytoskeleton. The protein localises to the cell cortex. Required for the correct formation of lens intermediate filaments. This chain is Filensin (BFSP1), found in Gallus gallus (Chicken).